A 338-amino-acid chain; its full sequence is H(2)-forming methylenetetrahydromethanopterin dehydrogenase-related protein MJ0715 (338 aa).

This sequence belongs to the HMD family.

The sequence is that of H(2)-forming methylenetetrahydromethanopterin dehydrogenase-related protein MJ0715 from Methanocaldococcus jannaschii (strain ATCC 43067 / DSM 2661 / JAL-1 / JCM 10045 / NBRC 100440) (Methanococcus jannaschii).